The chain runs to 308 residues: Putative integrase/recombinase y4qK (308 aa).

A Core-binding (CB) domain is found at 15 to 97 (LVMTPLRQRM…ALRFFFSVTL (83 aa)). The 174-residue stretch at 115 to 288 (KLPIILSPDE…ATNKVCATSS (174 aa)) folds into the Tyr recombinase domain. Residues Arg-150, Lys-175, His-240, Arg-243, and His-266 contribute to the active site. The O-(3'-phospho-DNA)-tyrosine intermediate role is filled by Tyr-275.

It belongs to the 'phage' integrase family.

Functionally, may function as an integrase. In Sinorhizobium fredii (strain NBRC 101917 / NGR234), this protein is Putative integrase/recombinase y4qK.